The following is a 447-amino-acid chain: Tubulin beta chain (447 aa).

GTP-binding residues include glutamine 11, glutamate 69, serine 138, glycine 142, threonine 143, glycine 144, asparagine 204, and asparagine 226. Glutamate 69 is a binding site for Mg(2+). Residues 419–447 (VSEYQQYQDATADEEGEYEDEDQEAEDDM) form a disordered region. A compositionally biased stretch (acidic residues) spans 429–447 (TADEEGEYEDEDQEAEDDM).

The protein belongs to the tubulin family. As to quaternary structure, dimer of alpha and beta chains. A typical microtubule is a hollow water-filled tube with an outer diameter of 25 nm and an inner diameter of 15 nM. Alpha-beta heterodimers associate head-to-tail to form protofilaments running lengthwise along the microtubule wall with the beta-tubulin subunit facing the microtubule plus end conferring a structural polarity. Microtubules usually have 13 protofilaments but different protofilament numbers can be found in some organisms and specialized cells. It depends on Mg(2+) as a cofactor.

It localises to the cytoplasm. It is found in the cytoskeleton. Tubulin is the major constituent of microtubules, a cylinder consisting of laterally associated linear protofilaments composed of alpha- and beta-tubulin heterodimers. Microtubules grow by the addition of GTP-tubulin dimers to the microtubule end, where a stabilizing cap forms. Below the cap, tubulin dimers are in GDP-bound state, owing to GTPase activity of alpha-tubulin. The chain is Tubulin beta chain (TUBB) from Hordeum vulgare (Barley).